A 326-amino-acid polypeptide reads, in one-letter code: Porphobilinogen deaminase (326 aa).

Residue Cys-251 is modified to S-(dipyrrolylmethanemethyl)cysteine.

It belongs to the HMBS family. Requires dipyrromethane as cofactor.

The catalysed reaction is 4 porphobilinogen + H2O = hydroxymethylbilane + 4 NH4(+). It participates in porphyrin-containing compound metabolism; protoporphyrin-IX biosynthesis; coproporphyrinogen-III from 5-aminolevulinate: step 2/4. Functionally, tetrapolymerization of the monopyrrole PBG into the hydroxymethylbilane pre-uroporphyrinogen in several discrete steps. The sequence is that of Porphobilinogen deaminase (HEM3) from Eremothecium gossypii (strain ATCC 10895 / CBS 109.51 / FGSC 9923 / NRRL Y-1056) (Yeast).